We begin with the raw amino-acid sequence, 459 residues long: Putrescine aminotransferase (459 aa).

Pyridoxal 5'-phosphate contacts are provided by residues 150 to 151 and glutamine 274; that span reads GT. An N6-(pyridoxal phosphate)lysine modification is found at lysine 300. A pyridoxal 5'-phosphate-binding site is contributed by threonine 332.

Belongs to the class-III pyridoxal-phosphate-dependent aminotransferase family. Putrescine aminotransferase subfamily. It depends on pyridoxal 5'-phosphate as a cofactor.

The catalysed reaction is an alkane-alpha,omega-diamine + 2-oxoglutarate = an omega-aminoaldehyde + L-glutamate. The enzyme catalyses putrescine + 2-oxoglutarate = 1-pyrroline + L-glutamate + H2O. It catalyses the reaction cadaverine + 2-oxoglutarate = 5-aminopentanal + L-glutamate. Its pathway is amine and polyamine degradation; putrescine degradation; 4-aminobutanal from putrescine (transaminase route): step 1/1. Its function is as follows. Catalyzes the aminotransferase reaction from putrescine to 2-oxoglutarate, leading to glutamate and 4-aminobutanal, which spontaneously cyclizes to form 1-pyrroline. This is the first step in one of two pathways for putrescine degradation, where putrescine is converted into 4-aminobutanoate (gamma-aminobutyrate or GABA) via 4-aminobutanal. Also functions as a cadaverine transaminase in a a L-lysine degradation pathway to succinate that proceeds via cadaverine, glutarate and L-2-hydroxyglutarate. This Salmonella paratyphi A (strain ATCC 9150 / SARB42) protein is Putrescine aminotransferase.